Here is a 304-residue protein sequence, read N- to C-terminus: Acetylglutamate kinase (304 aa).

Residues 82–83, Arg-104, and Asn-197 each bind substrate; that span reads GG.

It belongs to the acetylglutamate kinase family. ArgB subfamily.

The protein resides in the cytoplasm. The enzyme catalyses N-acetyl-L-glutamate + ATP = N-acetyl-L-glutamyl 5-phosphate + ADP. The protein operates within amino-acid biosynthesis; L-arginine biosynthesis; N(2)-acetyl-L-ornithine from L-glutamate: step 2/4. Functionally, catalyzes the ATP-dependent phosphorylation of N-acetyl-L-glutamate. The sequence is that of Acetylglutamate kinase from Prochlorococcus marinus (strain SARG / CCMP1375 / SS120).